A 394-amino-acid polypeptide reads, in one-letter code: Dihydroorotase (394 aa).

The Zn(2+) site is built by His-15, His-17, Lys-98, His-135, His-175, and Asp-245. Lys-98 carries the N6-carboxylysine modification.

Belongs to the metallo-dependent hydrolases superfamily. DHOase family. Class II DHOase subfamily. The cofactor is Zn(2+).

The enzyme catalyses (S)-dihydroorotate + H2O = N-carbamoyl-L-aspartate + H(+). The protein operates within pyrimidine metabolism; UMP biosynthesis via de novo pathway; (S)-dihydroorotate from bicarbonate: step 3/3. The protein is Dihydroorotase (PYR3) of Mycosarcoma maydis (Corn smut fungus).